A 150-amino-acid chain; its full sequence is MKLILTADVENLGVAGDIVEVKDGYGRNLLLPRGLAIVATRGAEKQIEGIKRAQEAREIRDLDHAREVKAQLEALEGVSVAVRTSEKGKLFGSVKAEDVAAAVKKAGGPNLDKRSIELPKSLVKATGAYKVNVKLHSDIAATVNFEVVAA.

The protein belongs to the bacterial ribosomal protein bL9 family.

Binds to the 23S rRNA. The sequence is that of Large ribosomal subunit protein bL9 from Corynebacterium diphtheriae (strain ATCC 700971 / NCTC 13129 / Biotype gravis).